We begin with the raw amino-acid sequence, 590 residues long: Shugoshin (590 aa).

The disordered stretch occupies residues 1–20; the sequence is MPKRKIAPNKESSRRTVSHD. The span at 11–20 shows a compositional bias: basic and acidic residues; the sequence is ESSRRTVSHD. The stretch at 25–86 forms a coiled coil; that stretch reads QIQEFQNLMD…QENVTLRSKT (62 aa). 3 disordered regions span residues 133–235, 291–337, and 411–550; these read LRTM…QVEE, PSNP…HSMK, and RNRE…NSNI. Positions 173–185 are enriched in basic and acidic residues; sequence SFNKDDGPDLEPK. Low complexity predominate over residues 302 to 326; sequence PSATLPTTTSDASTVYPSSSSSTNS. Over residues 328–337 the composition is skewed to basic residues; the sequence is PKTKIKHSMK. Over residues 448 to 459 the composition is skewed to basic and acidic residues; sequence KKTEDEIHEDTA. Residues 513 to 526 are compositionally biased toward polar residues; sequence IVNNLSDENSTTRP. The span at 527–550 shows a compositional bias: low complexity; sequence SKSSKGTSNNNNNYNNFDNNNSNI.

This sequence belongs to the shugoshin family. Post-translationally, ubiquitinated by the anaphase promoting complex (APC) at the onset of anaphase, conducting to its degradation.

The protein resides in the chromosome. Its subcellular location is the centromere. The protein localises to the kinetochore. It is found in the cytoplasm. It localises to the cytoskeleton. The protein resides in the spindle pole. Functionally, plays a central role in chromosome cohesion during mitosis and meiosis divisions by preventing premature dissociation of cohesin complex from centromeres after prophase, when most of cohesin complex dissociates from chromosomes arms. Probably act by protecting REC8 and RAD21 from separase degradation during anaphase. Also acts as a spindle checkpoint component required for sensing tension between sister chromatids during mitosis, its degradation when they separate preventing cell cycle arrest and chromosome loss in anaphase, a time when sister chromatids are no longer under tension. The sequence is that of Shugoshin (SGO1) from Saccharomyces cerevisiae (strain ATCC 204508 / S288c) (Baker's yeast).